The chain runs to 273 residues: Cilia- and flagella-associated protein 298-B (273 aa).

It belongs to the CFAP298 family.

The protein localises to the cytoplasm. It localises to the cytoskeleton. Its subcellular location is the cilium basal body. Functionally, plays a role in motile cilium function, possibly by acting on outer dynein arm assembly. Seems to be important for initiation rather than maintenance of cilium motility. Required for correct positioning of the cilium at the apical cell surface, suggesting an additional role in the planar cell polarity (PCP) pathway. May suppress canonical Wnt signaling activity. This is Cilia- and flagella-associated protein 298-B (cfap298-b) from Xenopus laevis (African clawed frog).